The chain runs to 587 residues: Methylcrotonoyl-CoA carboxylase beta chain, mitochondrial (587 aa).

Residues 1–26 (MLRILGRRVVSASKELTSIQQWRIRP) constitute a mitochondrion transit peptide. The region spanning 68–324 (MEGILSELRS…AAKQGMEGTF (257 aa)) is the CoA carboxyltransferase N-terminal domain. A carboxyltransferase region spans residues 68–579 (MEGILSELRS…SAALNRPLED (512 aa)). Residues 333 to 579 (EPLYDINELR…SAALNRPLED (247 aa)) form the CoA carboxyltransferase C-terminal domain. An acyl-CoA binding region spans residues 367 to 396 (EFDEFKKQYGTTLVTGFARIYGQTVGIIGN).

The protein belongs to the AccD/PCCB family. In terms of assembly, probably a heterodimer composed of biotin-containing alpha subunits and beta subunits. In terms of tissue distribution, in roots, cotyledons, leaves, flowers, ovaries, siliques and embryos.

The protein resides in the mitochondrion matrix. It catalyses the reaction 3-methylbut-2-enoyl-CoA + hydrogencarbonate + ATP = 3-methyl-(2E)-glutaconyl-CoA + ADP + phosphate + H(+). It participates in amino-acid degradation; L-leucine degradation; (S)-3-hydroxy-3-methylglutaryl-CoA from 3-isovaleryl-CoA: step 2/3. In terms of biological role, carboxyltransferase subunit of the 3-methylcrotonyl-CoA carboxylase, an enzyme that catalyzes the conversion of 3-methylcrotonyl-CoA to 3-methylglutaconyl-CoA, a critical step for leucine and isovaleric acid catabolism. This chain is Methylcrotonoyl-CoA carboxylase beta chain, mitochondrial (MCCB), found in Arabidopsis thaliana (Mouse-ear cress).